Here is a 211-residue protein sequence, read N- to C-terminus: Ras-related protein rab-11.1 (211 aa).

Residue 18-26 (GDSGVGKSN) coordinates GTP. The Effector region signature appears at 40 to 48 (SKSTIGVEF). GTP is bound by residues 66–70 (DTAGQ), 124–127 (NKSD), and 154–156 (SAL). The segment at 187–211 (GYGGGSGTIIPSPASDPPKKQCCIP) is disordered. Residues Cys208 and Cys209 are each lipidated (S-geranylgeranyl cysteine).

It belongs to the small GTPase superfamily. Rab family. In terms of assembly, interacts with rei-1 and rei-2. The GDP-form preferentially binds to rei-1 and rei-2. Expressed weakly in sperm, but more predominantly in oocytes. Expressed in the intestine.

The protein resides in the cytoplasmic vesicle. It is found in the secretory vesicle. Its subcellular location is the endosome. The protein localises to the cytoplasm. It localises to the cytoskeleton. The protein resides in the spindle. It is found in the microtubule organizing center. Its subcellular location is the spindle pole body. The protein localises to the centrosome. It localises to the apical cell membrane. The protein resides in the cytosol. It is found in the recycling endosome membrane. Its subcellular location is the golgi apparatus membrane. The protein localises to the cytoplasmic granule. Its function is as follows. The small GTPases Rab are key regulators of intracellular membrane trafficking, from the formation of transport vesicles to their fusion with membranes. Rabs cycle between an inactive GDP-bound form and an active GTP-bound form that is able to recruit to membranes different set of downstream effectors directly responsible for vesicle formation, movement, tethering and fusion. Involved in regulating the meiotic maturation of oocytes. Plays a role in egg shell formation, regulating exocytosis of chondroitin proteoglycans following fertilization. Controls cortical granule localization and targets them to the plasma membrane for exocytosis. Acts as a major regulator of membrane delivery during cytokinesis. Regulates the cytoskeleton by facilitating astral microtubule elongation and organization during metaphase to ensure proper spindle alignment and polarity in the first embryonic cell division. Maintains normal endoplasmic reticulum morphology during metaphase. Involved in vesicle formation and plasma membrane repair following exposure to pore forming toxins. Regulates endocytic recycling. May play a role in yolk receptor endocytosis in growing oocytes. Plays a role in the shedding of pathogen spores from intestinal cells via its involvement in spore fusion and endocytic trafficking. This is Ras-related protein rab-11.1 from Caenorhabditis elegans.